The following is a 411-amino-acid chain: Putative odorant receptor 59c (411 aa).

Residues Met1–Trp46 lie on the Cytoplasmic side of the membrane. Residues Ile47 to Leu67 traverse the membrane as a helical segment. At Ser68–Ser86 the chain is on the extracellular side. Residues Leu87 to Met107 traverse the membrane as a helical segment. At Trp108 to Arg139 the chain is on the cytoplasmic side. The chain crosses the membrane as a helical span at residues Val140–Phe160. The Extracellular portion of the chain corresponds to Thr161 to Gln185. A helical transmembrane segment spans residues Leu186 to Met206. The Cytoplasmic portion of the chain corresponds to Ser207–Thr271. A helical membrane pass occupies residues Ile272–Phe292. Over Phe293–Thr296 the chain is Extracellular. Residues Ile297–Cys317 traverse the membrane as a helical segment. Topologically, residues Cys318–Ile369 are cytoplasmic. Residues Phe370 to Ile390 traverse the membrane as a helical segment. Over Val391–Pro411 the chain is Extracellular.

It belongs to the insect chemoreceptor superfamily. Heteromeric odorant receptor channel (TC 1.A.69) family. Or2a subfamily. In terms of assembly, interacts with Orco. Complexes exist early in the endomembrane system in olfactory sensory neurons (OSNs), coupling these complexes to the conserved ciliary trafficking pathway. In terms of tissue distribution, expressed in olfactory sensory neurons in the maxillary palp.

Its subcellular location is the cell membrane. Odorant receptor which mediates acceptance or avoidance behavior, depending on its substrates. The odorant receptor repertoire encodes a large collection of odor stimuli that vary widely in identity, intensity, and duration. May form a complex with Orco to form odorant-sensing units, providing sensitive and prolonged odorant signaling and calcium permeability. This Drosophila melanogaster (Fruit fly) protein is Putative odorant receptor 59c (Or59c).